Here is a 562-residue protein sequence, read N- to C-terminus: Zinc finger protein 579 (562 aa).

The segment covering Met1 to Gly11 has biased composition (pro residues). Residues Met1 to Pro45 are disordered. Over residues Asp17–Gly35 the composition is skewed to basic residues. 3 consecutive C2H2-type zinc fingers follow at residues Leu46–His68, His74–His96, and Leu102–His125. Arg94 is modified (omega-N-methylarginine). Disordered regions lie at residues His120–Glu154 and Glu166–Gly199. Residues Asp187–Glu197 are compositionally biased toward basic and acidic residues. A Phosphoserine modification is found at Ser191. C2H2-type zinc fingers lie at residues His267–His289 and Phe295–His317. The tract at residues Ser321–Ala377 is disordered. Over residues Arg340–Gly367 the composition is skewed to gly residues. C2H2-type zinc fingers lie at residues Phe382–His404, Phe410–His432, and His439–His461. A Phosphoserine modification is found at Ser486. Residues Ala505–Ala530 form a disordered region. Residues Pro512–Pro525 are compositionally biased toward pro residues.

The protein belongs to the krueppel C2H2-type zinc-finger protein family.

Its subcellular location is the nucleus. In terms of biological role, may be involved in transcriptional regulation. This is Zinc finger protein 579 (Znf579) from Mus musculus (Mouse).